A 132-amino-acid polypeptide reads, in one-letter code: Flagellar basal body rod protein FlgB (132 aa).

Belongs to the flagella basal body rod proteins family. In terms of assembly, the basal body constitutes a major portion of the flagellar organelle and consists of a number of rings mounted on a central rod. In Gram-negative bacteria, at least four rings, L, P, S and M are present, whereas Gram-positive bacteria lack the L and P rings. The rod consists of about 26 subunits of FlgG in the distal portion, and FlgB, FlgC and FlgF build up the proximal portion of the rod with about 6 subunits each. Rod assembly occurs by export via the flagellum-specific pathway of its constituent proteins and by their incorporation into the rod structure in the probable order of FlgB, FlgC, FlgF and FlgG. Another protein, FliE, also assembles onto the stable rod structure.

The protein localises to the bacterial flagellum basal body. Functionally, structural component of flagellum, the bacterial motility apparatus. Part of the rod structure of flagellar basal body. This Aeromonas hydrophila protein is Flagellar basal body rod protein FlgB.